The sequence spans 450 residues: Phosphoglucosamine mutase (450 aa).

Ser-101 acts as the Phosphoserine intermediate in catalysis. Residues Ser-101, Asp-242, Asp-244, and Asp-246 each contribute to the Mg(2+) site. Residue Ser-101 is modified to Phosphoserine.

This sequence belongs to the phosphohexose mutase family. Requires Mg(2+) as cofactor. Activated by phosphorylation.

It catalyses the reaction alpha-D-glucosamine 1-phosphate = D-glucosamine 6-phosphate. Its function is as follows. Catalyzes the conversion of glucosamine-6-phosphate to glucosamine-1-phosphate. The polypeptide is Phosphoglucosamine mutase (Rhodopseudomonas palustris (strain BisB5)).